The chain runs to 345 residues: UDP-N-acetylenolpyruvoylglucosamine reductase (345 aa).

The 171-residue stretch at 16 to 186 (LSVSASCIKV…TAVGIFLKKE (171 aa)) folds into the FAD-binding PCMH-type domain. The active site involves Arg162. Catalysis depends on Ser232, which acts as the Proton donor. Glu328 is an active-site residue.

It belongs to the MurB family. The cofactor is FAD.

The protein localises to the cytoplasm. It carries out the reaction UDP-N-acetyl-alpha-D-muramate + NADP(+) = UDP-N-acetyl-3-O-(1-carboxyvinyl)-alpha-D-glucosamine + NADPH + H(+). Its pathway is cell wall biogenesis; peptidoglycan biosynthesis. Its function is as follows. Cell wall formation. The chain is UDP-N-acetylenolpyruvoylglucosamine reductase from Pectobacterium atrosepticum (strain SCRI 1043 / ATCC BAA-672) (Erwinia carotovora subsp. atroseptica).